The sequence spans 952 residues: Probable mixed-linked glucan synthase 6 (952 aa).

Transmembrane regions (helical) follow at residues 102–122 (LLHP…LFVI) and 132–152 (AMWL…SWLL). D227 is an active-site residue. The stretch at 278–308 (EEFVNDRRRVRKEYDDFKARINGLEHDIKQR) forms a coiled coil. Substrate is bound by residues D429 and D431. Residue D636 is part of the active site. Transmembrane regions (helical) follow at residues 718-738 (LFLI…HFIV), 744-764 (MFYV…VLEV), 782-802 (MTAS…KVVF), 834-854 (WLMI…AVAF), 865-885 (WLKV…LYPF), and 898-918 (VVVL…YINI).

It belongs to the glycosyltransferase 2 family. Plant cellulose synthase-like F subfamily.

The protein localises to the golgi apparatus membrane. Functionally, may catalyze both beta-1,3 and beta-1,4 glycosidic linkage on beta-D-glucan. Essential for (1,3;1,4)-beta-D-glucans synthesis in grasses and cereals (Poaceae). The mixed-linked glucans (which are not present in walls of dicotyledons or most other monocotyledonous plants) are particularly important constituents of the walls of the starchy endosperm and aleurone cells of cereal grains such as oats, wheat, rice and barley. They can account for up to 70% by weight of the wall. The polypeptide is Probable mixed-linked glucan synthase 6 (CSLF6) (Oryza sativa subsp. japonica (Rice)).